Here is a 356-residue protein sequence, read N- to C-terminus: 3-dehydroquinate synthase (356 aa).

NAD(+) contacts are provided by residues 71–76, 105–109, 129–130, Lys-142, and Lys-151; these read EGEASK, GVTGD, and TS. Zn(2+) contacts are provided by Glu-184, His-247, and His-264.

It belongs to the sugar phosphate cyclases superfamily. Dehydroquinate synthase family. Co(2+) is required as a cofactor. The cofactor is Zn(2+). Requires NAD(+) as cofactor.

It is found in the cytoplasm. It catalyses the reaction 7-phospho-2-dehydro-3-deoxy-D-arabino-heptonate = 3-dehydroquinate + phosphate. Its pathway is metabolic intermediate biosynthesis; chorismate biosynthesis; chorismate from D-erythrose 4-phosphate and phosphoenolpyruvate: step 2/7. Its function is as follows. Catalyzes the conversion of 3-deoxy-D-arabino-heptulosonate 7-phosphate (DAHP) to dehydroquinate (DHQ). The protein is 3-dehydroquinate synthase of Lactococcus lactis subsp. cremoris (strain MG1363).